The sequence spans 227 residues: PKHD-type hydroxylase Bxeno_B2756 (227 aa).

A Fe2OG dioxygenase domain is found at 80–179 (QVYPPLFNRY…RVASFFWVQS (100 aa)). Fe cation contacts are provided by His-98, Asp-100, and His-160. Arg-170 is a 2-oxoglutarate binding site.

It depends on Fe(2+) as a cofactor. L-ascorbate serves as cofactor.

The protein is PKHD-type hydroxylase Bxeno_B2756 of Paraburkholderia xenovorans (strain LB400).